The primary structure comprises 186 residues: Ribosome-recycling factor (186 aa).

The protein belongs to the RRF family.

It localises to the cytoplasm. In terms of biological role, responsible for the release of ribosomes from messenger RNA at the termination of protein biosynthesis. May increase the efficiency of translation by recycling ribosomes from one round of translation to another. In Burkholderia thailandensis (strain ATCC 700388 / DSM 13276 / CCUG 48851 / CIP 106301 / E264), this protein is Ribosome-recycling factor.